The following is a 577-amino-acid chain: Proline--tRNA ligase (577 aa).

It belongs to the class-II aminoacyl-tRNA synthetase family. ProS type 1 subfamily. As to quaternary structure, homodimer.

The protein localises to the cytoplasm. It catalyses the reaction tRNA(Pro) + L-proline + ATP = L-prolyl-tRNA(Pro) + AMP + diphosphate. Functionally, catalyzes the attachment of proline to tRNA(Pro) in a two-step reaction: proline is first activated by ATP to form Pro-AMP and then transferred to the acceptor end of tRNA(Pro). As ProRS can inadvertently accommodate and process non-cognate amino acids such as alanine and cysteine, to avoid such errors it has two additional distinct editing activities against alanine. One activity is designated as 'pretransfer' editing and involves the tRNA(Pro)-independent hydrolysis of activated Ala-AMP. The other activity is designated 'posttransfer' editing and involves deacylation of mischarged Ala-tRNA(Pro). The misacylated Cys-tRNA(Pro) is not edited by ProRS. This is Proline--tRNA ligase from Helicobacter pylori (strain P12).